The primary structure comprises 237 residues: Increased recombination centers protein 6 (237 aa).

Belongs to the IRC6 family.

Functionally, involved in gross chromosomal rearrangements (GCRs) and telomere healing. The chain is Increased recombination centers protein 6 (IRC6) from Saccharomyces cerevisiae (strain ATCC 204508 / S288c) (Baker's yeast).